We begin with the raw amino-acid sequence, 415 residues long: Glucose-1-phosphate adenylyltransferase (415 aa).

Alpha-D-glucose 1-phosphate-binding positions include Y100, G165, 182 to 183 (EK), and S200.

The protein belongs to the bacterial/plant glucose-1-phosphate adenylyltransferase family. In terms of assembly, homotetramer.

The catalysed reaction is alpha-D-glucose 1-phosphate + ATP + H(+) = ADP-alpha-D-glucose + diphosphate. It participates in glycan biosynthesis; glycogen biosynthesis. Involved in the biosynthesis of ADP-glucose, a building block required for the elongation reactions to produce glycogen. Catalyzes the reaction between ATP and alpha-D-glucose 1-phosphate (G1P) to produce pyrophosphate and ADP-Glc. This chain is Glucose-1-phosphate adenylyltransferase, found in Bifidobacterium animalis subsp. lactis (strain AD011).